The chain runs to 59 residues: Cecropin-C type 2 (59 aa).

Positions 1–23 (MNFAKVFVLVAMAVLLLVGQSEA) are cleaved as a signal peptide.

The protein belongs to the cecropin family.

It is found in the secreted. Cecropins have lytic and antibacterial activity against several Gram-positive and Gram-negative bacteria. This Aedes albopictus (Asian tiger mosquito) protein is Cecropin-C type 2 (CECC2).